The sequence spans 785 residues: Ubiquitin carboxyl-terminal hydrolase 10 (785 aa).

Composition is skewed to polar residues over residues 113-122 and 262-277; these read LTLDSGSNAE and DTTE…TLES. Disordered stretches follow at residues 113–145 and 262–314; these read LTLD…PPGY and DTTE…ATAT. Over residues 290–304 the composition is skewed to basic and acidic residues; sequence HTVESTDSDQAKPEE. The span at 305-314 shows a compositional bias: low complexity; the sequence is ASPTTEATAT. In terms of domain architecture, USP spans 401 to 782; it reads RGLINKGNWC…TAYLLYYRRV (382 aa). The Nucleophile role is filled by Cys410. Positions 537–581 are disordered; it reads EKLSVSNGPEVQTVREEEEQDEQGEGSEDEWEQVGPRNKSSVTRQ. Residues 552–568 are compositionally biased toward acidic residues; the sequence is EEEEQDEQGEGSEDEWE. The Proton acceptor role is filled by His736.

It belongs to the peptidase C19 family. USP10 subfamily.

It is found in the cytoplasm. The protein localises to the nucleus. The catalysed reaction is Thiol-dependent hydrolysis of ester, thioester, amide, peptide and isopeptide bonds formed by the C-terminal Gly of ubiquitin (a 76-residue protein attached to proteins as an intracellular targeting signal).. Hydrolase that can remove conjugated ubiquitin from target proteins such as p53/TP53, RPS2/us5, RPS3/us3, RPS10/eS10, BECN1, SNX3 and CFTR. Acts as an essential regulator of p53/TP53 stability: in unstressed cells, specifically deubiquitinates p53/TP53 in the cytoplasm, leading to counteracts MDM2 action and stabilize p53/TP53. Following DNA damage, translocates to the nucleus and deubiquitinates p53/TP53, leading to regulate the p53/TP53-dependent DNA damage response. Component of a regulatory loop that controls autophagy and p53/TP53 levels. Plays a key role in 40S ribosome subunit recycling when a ribosome has stalled during translation: acts both by inhibiting formation of stress granules, which store stalled translation pre-initiation complexes, and mediating deubiquitination of 40S ribosome subunits. Deubiquitinates CFTR in early endosomes, enhancing its endocytic recycling. The protein is Ubiquitin carboxyl-terminal hydrolase 10 (USP10) of Gallus gallus (Chicken).